A 772-amino-acid polypeptide reads, in one-letter code: Polyribonucleotide nucleotidyltransferase (772 aa).

Mg(2+) contacts are provided by Asp486 and Asp492. Residues 553-612 (PRIETLQIDKSKIRDVIGTGGKVIREIVATTGAKVDIDDEGLIKISSSDLTQIEAAKNWI) enclose the KH domain. Residues 622 to 690 (GKIYKGKVVN…QRGKVRLSMR (69 aa)) form the S1 motif domain. Residues 695–772 (ETGAELEDTR…HMPAFLKSDD (78 aa)) form a disordered region. The span at 701-760 (EDTRPPREPREPRGDRGDRGDRGDRRGPRGDRGPRREGGDRGPRREGGDRPRRDRDDGPA) shows a compositional bias: basic and acidic residues.

The protein belongs to the polyribonucleotide nucleotidyltransferase family. Mg(2+) is required as a cofactor.

The protein localises to the cytoplasm. The catalysed reaction is RNA(n+1) + phosphate = RNA(n) + a ribonucleoside 5'-diphosphate. Functionally, involved in mRNA degradation. Catalyzes the phosphorolysis of single-stranded polyribonucleotides processively in the 3'- to 5'-direction. This chain is Polyribonucleotide nucleotidyltransferase, found in Novosphingobium aromaticivorans (strain ATCC 700278 / DSM 12444 / CCUG 56034 / CIP 105152 / NBRC 16084 / F199).